The following is a 454-amino-acid chain: Bifunctional protein GlmU (454 aa).

The interval 1–226 (MSLDIVILAA…AMEVQGANDR (226 aa)) is pyrophosphorylase. Residues 8–11 (LAAG), Lys22, Gln73, 78–79 (GT), 99–101 (YGD), Gly136, Glu151, Asn166, and Asn224 contribute to the UDP-N-acetyl-alpha-D-glucosamine site. A Mg(2+)-binding site is contributed by Asp101. Position 224 (Asn224) interacts with Mg(2+). The tract at residues 227–247 (LQLAQLERHYQSRVARRLMAQ) is linker. Positions 248 to 454 (GVTLRDPARF…GWQRPTKQKK (207 aa)) are N-acetyltransferase. 2 residues coordinate UDP-N-acetyl-alpha-D-glucosamine: Arg330 and Lys348. His360 acts as the Proton acceptor in catalysis. 2 residues coordinate UDP-N-acetyl-alpha-D-glucosamine: Tyr363 and Asn374. Residues Ala377, 383–384 (NY), Ser402, Ala420, and Arg437 each bind acetyl-CoA.

The protein in the N-terminal section; belongs to the N-acetylglucosamine-1-phosphate uridyltransferase family. It in the C-terminal section; belongs to the transferase hexapeptide repeat family. Homotrimer. Mg(2+) serves as cofactor.

The protein resides in the cytoplasm. The enzyme catalyses alpha-D-glucosamine 1-phosphate + acetyl-CoA = N-acetyl-alpha-D-glucosamine 1-phosphate + CoA + H(+). It catalyses the reaction N-acetyl-alpha-D-glucosamine 1-phosphate + UTP + H(+) = UDP-N-acetyl-alpha-D-glucosamine + diphosphate. It participates in nucleotide-sugar biosynthesis; UDP-N-acetyl-alpha-D-glucosamine biosynthesis; N-acetyl-alpha-D-glucosamine 1-phosphate from alpha-D-glucosamine 6-phosphate (route II): step 2/2. Its pathway is nucleotide-sugar biosynthesis; UDP-N-acetyl-alpha-D-glucosamine biosynthesis; UDP-N-acetyl-alpha-D-glucosamine from N-acetyl-alpha-D-glucosamine 1-phosphate: step 1/1. The protein operates within bacterial outer membrane biogenesis; LPS lipid A biosynthesis. In terms of biological role, catalyzes the last two sequential reactions in the de novo biosynthetic pathway for UDP-N-acetylglucosamine (UDP-GlcNAc). The C-terminal domain catalyzes the transfer of acetyl group from acetyl coenzyme A to glucosamine-1-phosphate (GlcN-1-P) to produce N-acetylglucosamine-1-phosphate (GlcNAc-1-P), which is converted into UDP-GlcNAc by the transfer of uridine 5-monophosphate (from uridine 5-triphosphate), a reaction catalyzed by the N-terminal domain. This chain is Bifunctional protein GlmU, found in Azotobacter vinelandii (strain DJ / ATCC BAA-1303).